The sequence spans 462 residues: Lysophospholipid acyltransferase 1 (462 aa).

9 helical membrane passes run 9–29, 52–72, 84–104, 158–178, 211–231, 263–283, 353–373, 396–416, and 431–451; these read SIGV…TIPV, FLSY…PMTI, CGII…VFYM, SLIE…GPVY, AILQ…QYPL, YFIW…FSGW, AVWH…ALMI, IMVF…AVGF, and VYYI…VVPA. The active site involves H356.

Belongs to the membrane-bound acyltransferase family. As to expression, expressed in roots, rosette leaves, petals, stigma, chalazal endosperm of developing seeds and vascular bundles of siliques.

The protein resides in the endoplasmic reticulum membrane. It catalyses the reaction a 1-acyl-sn-glycero-3-phosphocholine + an acyl-CoA = a 1,2-diacyl-sn-glycero-3-phosphocholine + CoA. The catalysed reaction is 1-(9Z-octadecenoyl)-sn-glycero-3-phosphocholine + (9Z)-octadecenoyl-CoA = 1,2-di-(9Z-octadecenoyl)-sn-glycero-3-phosphocholine + CoA. It carries out the reaction 1-(9Z-octadecenoyl)-sn-glycero-3-phosphocholine + (9Z,12Z)-octadecadienoyl-CoA = 1-(9Z)-octadecenoyl-2-(9Z,12Z)-octadecadienoyl-sn-glycero-3-phosphocholine + CoA. The enzyme catalyses (9Z,12Z,15Z)-octadecatrienoyl-CoA + 1-(9Z-octadecenoyl)-sn-glycero-3-phosphocholine = 1-(9Z-octadecaenoyl)-2-(9Z,12Z,15Z-octadecatrienoyl)-sn-glycero-3-phosphocholine + CoA. It catalyses the reaction a 1-acyl-sn-glycero-3-phosphoethanolamine + an acyl-CoA = a 1,2-diacyl-sn-glycero-3-phosphoethanolamine + CoA. The catalysed reaction is a 1-acyl-sn-glycero-3-phospho-L-serine + an acyl-CoA = a 1,2-diacyl-sn-glycero-3-phospho-L-serine + CoA. Lysophospholipid acyltransferase with broad specificity. Mediates the conversion of lysophosphatidylethanolamine (1-acyl-sn-glycero-3-phosphoethanolamine or LPE) into phosphatidylethanolamine (1,2-diacyl-sn-glycero-3-phosphoethanolamine or PE) (LPEAT activity). Catalyzes the acylation of lysophosphatidylserine (1-acyl-2-hydroxy-sn-glycero-3-phospho-L-serine or LPS) into phosphatidylserine (1,2-diacyl-sn-glycero-3-phospho-L-serine or PS) (LPSAT activity). Can convert lysophosphatidylcholine (1-acyl-sn-glycero-3-phosphocholine or LPC) into phosphatidylcholine (1,2-diacyl-sn-glycero-3-phosphocholine or PC) (LPCAT activity). Exhibits preference for C18-unsaturated acyl-CoA when transferring an acyl group to lysophosphatidylcholine. Can also utilize lysophosphatidylglycerol (LPG) as substrate in vitro. Has neither activity towards lysophosphatidic acid (LPA) nor lysophosphatidylinositol (LPI). Lysophospholipid acyltransferases catalyze the reacylation step of the phospholipid remodeling pathway also known as the Lands cycle. The primary function of the Lands cycle is to provide a route for acyl remodeling to modify fatty acid (FA) composition of phospholipids derived from the Kennedy pathway. Is involved in PC acyl editing and phosphocholine headgroup exchange between PC and diacylglycerols. This processes control the majority of acyl fluxes through PC to provide polyunsaturated fatty acids for triacylglycerols synthesis in seeds. Involved with LPCAT2 in the direct incorporation of newly synthesized fatty acids exported form the chloroplast into PC through acyl editing. The sequence is that of Lysophospholipid acyltransferase 1 from Arabidopsis thaliana (Mouse-ear cress).